Reading from the N-terminus, the 432-residue chain is Asparagine--tRNA ligase (432 aa).

Belongs to the class-II aminoacyl-tRNA synthetase family. As to quaternary structure, homodimer.

Its subcellular location is the cytoplasm. It catalyses the reaction tRNA(Asn) + L-asparagine + ATP = L-asparaginyl-tRNA(Asn) + AMP + diphosphate + H(+). This chain is Asparagine--tRNA ligase, found in Lactobacillus gasseri (strain ATCC 33323 / DSM 20243 / BCRC 14619 / CIP 102991 / JCM 1131 / KCTC 3163 / NCIMB 11718 / NCTC 13722 / AM63).